The sequence spans 176 residues: Pituitary adenylate cyclase-activating polypeptide (176 aa).

The signal sequence occupies residues 1 to 24; that stretch reads MTMCSGARLALLVYGILMHSSVYG. A propeptide spanning residues 25–80 is cleaved from the precursor; sequence SPAASGLRFPGIRPENEVYDEDGNPQQDFYDSESLGVGSPASALRDAYALYYPAEE. A disordered region spans residues 98-135; it reads QPSARRSPADAHGQGLGWDPGGSADDDSEPLSKRHSDG. Residues 150–158 are important for receptor binding; it reads VKKYLAAVL. Leu-158 carries the leucine amide modification. At Lys-169 the chain carries Lysine amide. The propeptide occupies 173 to 176; it reads IPYL.

It belongs to the glucagon family. In terms of assembly, interacts with ADCYAP1R1 (via N-terminal extracellular domain); both PACAP27 and PACAP38 neuropeptides function as ligand for the ADCYAP1R1 receptor, which modulates the activity of downstream effectors. Interacts with VIPR1 and VIPR2; functions as ligand for VIPR1 and VIPR2 receptors, which modulate the activity of downstream effectors.

Its subcellular location is the secreted. PACAP is a neuropeptide involved in diverse array of physiological processes through activating the PACAP subfamily of class B1 G protein-coupled receptors: VIP receptor 1 (VIPR1), VIP receptor 2 (VIPR2), and PACAP type I receptor (ADCYAP1R1). Exerts neuroprotective and general cytoprotective effects due to anti-apoptotic, anti-inflammatory, and antioxidant actions. Promotes neuron projection development through the RAPGEF2/Rap1/B-Raf/ERK pathway. In chromaffin cells, induces long-lasting increase of intracellular calcium concentrations and neuroendocrine secretion. Involved in the control of glucose homeostasis, induces insulin secretion by pancreatic beta cells. PACAP exists in two bioactive forms from proteolysis of the same precursor protein, PACAP27 and PACAP38, which differ by eleven amino acid residues in the C-terminus. The chain is Pituitary adenylate cyclase-activating polypeptide (ADCYAP1) from Bos taurus (Bovine).